Here is a 247-residue protein sequence, read N- to C-terminus: Carboxy-S-adenosyl-L-methionine synthase (247 aa).

Residues tyrosine 39, 64 to 66 (GCS), 89 to 90 (DN), 117 to 118 (DI), asparagine 132, and arginine 199 each bind S-adenosyl-L-methionine.

Belongs to the class I-like SAM-binding methyltransferase superfamily. Cx-SAM synthase family. In terms of assembly, homodimer.

The enzyme catalyses prephenate + S-adenosyl-L-methionine = carboxy-S-adenosyl-L-methionine + 3-phenylpyruvate + H2O. In terms of biological role, catalyzes the conversion of S-adenosyl-L-methionine (SAM) to carboxy-S-adenosyl-L-methionine (Cx-SAM). This chain is Carboxy-S-adenosyl-L-methionine synthase, found in Salmonella arizonae (strain ATCC BAA-731 / CDC346-86 / RSK2980).